The primary structure comprises 561 residues: Acyl-CoA ligase ppsA (561 aa).

Asn21 is a glycosylation site (N-linked (GlcNAc...) asparagine). A helical transmembrane segment spans residues 71 to 91; that stretch reads SILYPALFLAIVGVGAVYMGA. 203–214 contacts AMP; it reads MFATSGTSGLPK. An N-linked (GlcNAc...) asparagine glycan is attached at Asn396. Residues 462 to 540 form an AMP-binding region; it reads ELEAELAQHP…DSIPRNSGGK (79 aa).

This sequence belongs to the ATP-dependent AMP-binding enzyme family.

The protein localises to the membrane. It catalyses the reaction acetate + ATP + CoA = acetyl-CoA + ADP + phosphate. It carries out the reaction propanoate + ATP + CoA = propanoyl-CoA + AMP + diphosphate. Its pathway is secondary metabolite biosynthesis. Acyl-CoA ligase; part of the gene cluster that mediates the biosynthesis of 2,4'-dihydroxy-3'-methoxypropiophenone. The first step of the pathway is the conversion of acetate into acetyl-CoA by the acyl-CoA ligase ppsA. Acetyl-CoA is then used as a starter unit by the polyketide synthase ppsB and condensed with 4 malonyl-CoA unit to produce the pentaketide backbone. During polyketide extension, the polykedite chain is probably reduced and dehydrated by the KR and PT domains, respectively. O-methylation seems to be catalyzed by an unknown methyltransferase rather than by the CMeT domain of ppsB. Two hydroxylations and one further decarboxylation step catalyzed by yet unknown enzymes are then required to yield 4'-hydroxy-3'-methoxypropiophenone. PpsC functions as a carrier protein to transport 4'-hydroxy-3'-methoxypropiophenone to a specific cell compartment in which 4'-hydroxy-3'-methoxypropiophenone is hydroxylated to 2,4'-dihydroxy-3'-methoxypropiophenone by a still to be identified enzyme. In Aspergillus oryzae (strain ATCC 42149 / RIB 40) (Yellow koji mold), this protein is Acyl-CoA ligase ppsA.